Consider the following 185-residue polypeptide: Ribosome-recycling factor (185 aa).

It belongs to the RRF family.

The protein resides in the cytoplasm. Functionally, responsible for the release of ribosomes from messenger RNA at the termination of protein biosynthesis. May increase the efficiency of translation by recycling ribosomes from one round of translation to another. In Rhodococcus erythropolis (strain PR4 / NBRC 100887), this protein is Ribosome-recycling factor.